We begin with the raw amino-acid sequence, 276 residues long: Diacetylchitobiose uptake system permease protein DasC (276 aa).

6 helical membrane passes run 14-34 (TAVVLFIGLVFPVYWMFATAF), 74-94 (LIVTVCAVVFSLVIALAGSFA), 105-125 (GFIVGFMLAQMAPWEVMVIAI), 137-157 (SLVPLTLFYMMMILPFTILTL), 186-206 (VILPLLAPGLMSTSMFGFITA), and 241-261 (GATMAASSLFAIPILILFVYL). The ABC transmembrane type-1 domain maps to 70–261 (VSNSLIVTVC…IPILILFVYL (192 aa)).

Belongs to the binding-protein-dependent transport system permease family. The complex is composed of two ATP-binding proteins (MsiK), two transmembrane proteins (DasB and DasC) and a solute-binding protein (DasA).

It localises to the cell membrane. Functionally, part of the ABC transporter complex DasABC-MsiK involved in N,N'-diacetylchitobiose ((GlcNAc)2) uptake. Responsible for the translocation of the substrate across the membrane. The polypeptide is Diacetylchitobiose uptake system permease protein DasC (Streptomyces coelicolor (strain ATCC BAA-471 / A3(2) / M145)).